We begin with the raw amino-acid sequence, 547 residues long: Rho GTPase-activating protein 36 (547 aa).

Positions 1-40 (MGGCIPFLKAARALCPRIMPPLLLLSAFIFLVSVLGGAPG) are cleaved as a signal peptide. In terms of domain architecture, Rho-GAP spans 226 to 426 (MSLNPIAKQI…AMIDNWDVLF (201 aa)). Residues 485-547 (AVLAQSKPSD…AKTGVSYFFP (63 aa)) are disordered. The segment covering 524–539 (EQDRPLLRVPREKEAK) has biased composition (basic and acidic residues).

May interacts (via the Rho-GAP domain) with the active form of RAC1. In terms of tissue distribution, detected in the outer root sheath of hair follicles at the level of the stem cell bulge, during the anagen and telogen phases of hair growth (at protein level).

Its function is as follows. GTPase activator for the Rho-type GTPases by converting them to an inactive GDP-bound state. The sequence is that of Rho GTPase-activating protein 36 (ARHGAP36) from Homo sapiens (Human).